The primary structure comprises 488 residues: Protein nucleotidyltransferase YdiU (488 aa).

Residues Gly91, Gly93, Arg94, Lys114, Asp126, Gly127, Arg177, and Arg184 each contribute to the ATP site. Residue Asp253 is the Proton acceptor of the active site. The Mg(2+) site is built by Asn254 and Asp263. Residue Asp263 coordinates ATP.

It belongs to the SELO family. Mg(2+) serves as cofactor. Requires Mn(2+) as cofactor.

It carries out the reaction L-seryl-[protein] + ATP = 3-O-(5'-adenylyl)-L-seryl-[protein] + diphosphate. The enzyme catalyses L-threonyl-[protein] + ATP = 3-O-(5'-adenylyl)-L-threonyl-[protein] + diphosphate. The catalysed reaction is L-tyrosyl-[protein] + ATP = O-(5'-adenylyl)-L-tyrosyl-[protein] + diphosphate. It catalyses the reaction L-histidyl-[protein] + UTP = N(tele)-(5'-uridylyl)-L-histidyl-[protein] + diphosphate. It carries out the reaction L-seryl-[protein] + UTP = O-(5'-uridylyl)-L-seryl-[protein] + diphosphate. The enzyme catalyses L-tyrosyl-[protein] + UTP = O-(5'-uridylyl)-L-tyrosyl-[protein] + diphosphate. Nucleotidyltransferase involved in the post-translational modification of proteins. It can catalyze the addition of adenosine monophosphate (AMP) or uridine monophosphate (UMP) to a protein, resulting in modifications known as AMPylation and UMPylation. This chain is Protein nucleotidyltransferase YdiU, found in Bacillus cereus (strain AH187).